We begin with the raw amino-acid sequence, 360 residues long: Fe(3+) ions import ATP-binding protein FbpC (360 aa).

The ABC transporter domain maps to 4-236; the sequence is LEIKGLHKHY…PKDRMIAEFL (233 aa). 36–43 contributes to the ATP binding site; it reads GPSGCGKT.

This sequence belongs to the ABC transporter superfamily. Fe(3+) ion importer (TC 3.A.1.10) family. In terms of assembly, the complex is composed of two ATP-binding proteins (FbpC), two transmembrane proteins (FbpB) and a solute-binding protein (FbpA).

It localises to the cell inner membrane. It carries out the reaction Fe(3+)(out) + ATP + H2O = Fe(3+)(in) + ADP + phosphate + H(+). Its function is as follows. Part of the ABC transporter complex FbpABC involved in Fe(3+) ions import. Responsible for energy coupling to the transport system. The polypeptide is Fe(3+) ions import ATP-binding protein FbpC (Mesorhizobium japonicum (strain LMG 29417 / CECT 9101 / MAFF 303099) (Mesorhizobium loti (strain MAFF 303099))).